The primary structure comprises 451 residues: Uronate isomerase (451 aa).

The protein belongs to the metallo-dependent hydrolases superfamily. Uronate isomerase family.

The enzyme catalyses D-glucuronate = D-fructuronate. It catalyses the reaction aldehydo-D-galacturonate = keto-D-tagaturonate. It functions in the pathway carbohydrate metabolism; pentose and glucuronate interconversion. This chain is Uronate isomerase, found in Thermotoga neapolitana (strain ATCC 49049 / DSM 4359 / NBRC 107923 / NS-E).